The sequence spans 101 residues: Aspartyl/glutamyl-tRNA(Asn/Gln) amidotransferase subunit C (101 aa).

It belongs to the GatC family. As to quaternary structure, heterotrimer of A, B and C subunits.

The enzyme catalyses L-glutamyl-tRNA(Gln) + L-glutamine + ATP + H2O = L-glutaminyl-tRNA(Gln) + L-glutamate + ADP + phosphate + H(+). It catalyses the reaction L-aspartyl-tRNA(Asn) + L-glutamine + ATP + H2O = L-asparaginyl-tRNA(Asn) + L-glutamate + ADP + phosphate + 2 H(+). Allows the formation of correctly charged Asn-tRNA(Asn) or Gln-tRNA(Gln) through the transamidation of misacylated Asp-tRNA(Asn) or Glu-tRNA(Gln) in organisms which lack either or both of asparaginyl-tRNA or glutaminyl-tRNA synthetases. The reaction takes place in the presence of glutamine and ATP through an activated phospho-Asp-tRNA(Asn) or phospho-Glu-tRNA(Gln). The chain is Aspartyl/glutamyl-tRNA(Asn/Gln) amidotransferase subunit C from Salinispora tropica (strain ATCC BAA-916 / DSM 44818 / JCM 13857 / NBRC 105044 / CNB-440).